A 213-amino-acid chain; its full sequence is A-type ATP synthase subunit D (213 aa).

The protein belongs to the V-ATPase D subunit family. In terms of assembly, has multiple subunits with at least A(3), B(3), C, D, E, F, H, I and proteolipid K(x).

It is found in the cell membrane. Its function is as follows. Component of the A-type ATP synthase that produces ATP from ADP in the presence of a proton gradient across the membrane. In Saccharolobus islandicus (strain L.S.2.15 / Lassen #1) (Sulfolobus islandicus), this protein is A-type ATP synthase subunit D.